A 1246-amino-acid polypeptide reads, in one-letter code: MSKTITKKVNKKTKKSTKINPKKLAKKPIIKSIDKPTNLTDVDFDKLIHTVETSTKRHFIAIEFNKKPVNNIANLGAKVNQKARLERSGEYYGIGVEILETIRPLLTNRLIIKILKLLKQENLTSPLKILDLNSLDELHYVLHCWLENATTVYDDCLNSYDKSYPEYDQWIRTVRSDPLNCKVRLTEIGFNEKTGGSVVPADWIDGEFDSGISLHKEMDKLETRIGKPPATYAIIHSMMIQKQDSIIEDITNTKFDYLFYVDLIDNKLVSKLVSKIRKKPYQYVKYDNTIIGFCLEDILTTKSQNNKKPREVGLYVSRLQKSIRRGRFGSQIMRETIDAINESPNYNLPEHGFMRVSASKQLVWRLFISILEDCRPYVTSGNELSLLDLILLVLITQKCLEYKFTDNLLELIKVTALMAQYNDTKSDLFDWRKFTESIKTPINPKSDYHTAISLALGNVIMMSGDTRMLKKLYSVNLVFKEFKRPKCNSLLELTSSNFKLTDQDTYQDIMLTSIDHHCKPNIILYYQACIPVSLTTREISSYIWKISSSYNIRSGKTQNNIDQVLRLVQNFLLEKSTKVSNEINNTFLNYSCNEIEPDNKTRRTSFLILFGSKYKFGGKDVMLAGTKKNPVKIKTKNEWVYSKDMAVINAYPKKYIYTKYLDPPFGFKWTKPKFWTEIIDGKPYVDGTNVDFFDGSIALKSITPLVTKKCNKYTTSLITTFFSGLDIELESILDVRNKSKPQIVNWVNTIDLNDIDLELVRCTYTKIFNQFNNTIMIGPCDRSGNKMHNSINYKLEGKLWAIFNLLHYLYPKTINPNSALNFSLNRSTQGYIHLIKSLEQLLFVGKNITGLVPTISTKLWDHQQETVNTMVAKFTDGYHGFGDASDVGSGKTLTSLALASKLINTINDIHSGILVLLPGNKLIVTWQDEIDKHTKNFDVKLHKPSGDIGKIKRNTIVISTMGRQRDNPINHKWLLVIIDECLSVQNKNALQTEQAFIQSLLAKYLVMMSATFFRTRFDKLYYMLKMLQTGLPERKQYLETILAESIVAKVPLSGMKWTTNIIHFQLNSLTRELYNKIIDKDLSVEAKYAKLNSLLVNNKEVNNMVVKQLSKLIAELTKQGCKCLIYARSQDEAKLWSNNLKIPIYPKKGDHCIVTYHDGTYGLNDLVIYNTIVMRPPTPDSLPQIKGRLARPGQKNNNLRIEYFVLEDTIEEGLLIRLEIASKFVHQYIMPLAKFYNISVNHQKYK.

Residues 1–21 are disordered; sequence MSKTITKKVNKKTKKSTKINP. The 159-residue stretch at 872-1030 folds into the Helicase ATP-binding domain; that stretch reads AKFTDGYHGF…YYMLKMLQTG (159 aa). 885–892 is a binding site for ATP; it reads SDVGSGKT.

The sequence is that of Putative helicase L115 from Acanthamoeba polyphaga (Amoeba).